Here is a 617-residue protein sequence, read N- to C-terminus: Neopullulanase SusA (617 aa).

Residues 1–22 (MKRNLLFIILLLLLPGLHQVFA) form the signal peptide. Residues Asn-138, Asn-143, Asp-144, Gly-164, and Asp-166 each coordinate Ca(2+). Catalysis depends on residues Asp-331 and Glu-360.

The protein belongs to the glycosyl hydrolase 13 family. It depends on Ca(2+) as a cofactor.

The protein resides in the periplasm. It carries out the reaction Hydrolysis of pullulan to panose (6-alpha-D-glucosylmaltose).. The protein operates within glycan degradation; starch degradation. Functionally, neopullulanase that cleaves 1,4-alpha-glucosidic linkages in starch to produce disaccharides or trisaccharides in starch degradation. The chain is Neopullulanase SusA (susA) from Bacteroides thetaiotaomicron (strain ATCC 29148 / DSM 2079 / JCM 5827 / CCUG 10774 / NCTC 10582 / VPI-5482 / E50).